Consider the following 215-residue polypeptide: ATP phosphoribosyltransferase (215 aa).

Belongs to the ATP phosphoribosyltransferase family. Short subfamily. In terms of assembly, heteromultimer composed of HisG and HisZ subunits.

It localises to the cytoplasm. The enzyme catalyses 1-(5-phospho-beta-D-ribosyl)-ATP + diphosphate = 5-phospho-alpha-D-ribose 1-diphosphate + ATP. The protein operates within amino-acid biosynthesis; L-histidine biosynthesis; L-histidine from 5-phospho-alpha-D-ribose 1-diphosphate: step 1/9. Catalyzes the condensation of ATP and 5-phosphoribose 1-diphosphate to form N'-(5'-phosphoribosyl)-ATP (PR-ATP). Has a crucial role in the pathway because the rate of histidine biosynthesis seems to be controlled primarily by regulation of HisG enzymatic activity. This Gloeothece citriformis (strain PCC 7424) (Cyanothece sp. (strain PCC 7424)) protein is ATP phosphoribosyltransferase.